Here is a 103-residue protein sequence, read N- to C-terminus: Acyl-CoA-binding protein (103 aa).

An ACB domain is found at 18 to 103; sequence HQADFDEAAE…AKTMVEKYGI (86 aa). Residues Lys30, 45–49, Lys67, Lys71, and Tyr90 each bind an acyl-CoA; that span reads YGFYK.

This sequence belongs to the ACBP family. As to quaternary structure, monomer.

It is found in the endoplasmic reticulum. The protein localises to the golgi apparatus. Functionally, binds medium- and long-chain acyl-CoA esters with very high affinity and may function as an intracellular carrier of acyl-CoA esters. It is also able to displace diazepam from the benzodiazepine (BZD) recognition site located on the GABA type A receptor. It is therefore possible that this protein also acts as a neuropeptide to modulate the action of the GABA receptor. The sequence is that of Acyl-CoA-binding protein (DBI) from Anas platyrhynchos (Mallard).